Here is a 123-residue protein sequence, read N- to C-terminus: DNA-directed RNA polymerase I subunit RPA12 (123 aa).

Zn(2+) contacts are provided by cysteine 17, cysteine 20, cysteine 35, cysteine 38, cysteine 84, and cysteine 87. A C4-type zinc finger spans residues 17–38; sequence CPDCGSVLPLPGVQDAVACTRC. A TFIIS-type zinc finger spans residues 80–120; sequence VDRRCSRCGHEGMAYHTRQMRSADEGQTVFYTCTNCKFQEK. Positions 103-104 match the Hairpin motif; sequence DE. Residues cysteine 112 and cysteine 115 each contribute to the Zn(2+) site.

It belongs to the archaeal RpoM/eukaryotic RPA12/RPB9/RPC11 RNA polymerase family. Component of the RNA polymerase I (Pol I) complex consisting of at least 13 subunits.

The protein resides in the nucleus. Its subcellular location is the nucleolus. In terms of biological role, core component of RNA polymerase I (Pol I), a DNA-dependent RNA polymerase which synthesizes ribosomal RNA precursors using the four ribonucleoside triphosphates as substrates. Can mediate Pol I proofreading of the nascent RNA transcript. Anchors into the Pol I active site to monitor transcription fidelity and cleave mis-incorporated 5'-ribonucleotides. The chain is DNA-directed RNA polymerase I subunit RPA12 from Bos taurus (Bovine).